Here is a 318-residue protein sequence, read N- to C-terminus: Protease HtpX homolog (318 aa).

The next 3 helical transmembrane spans lie at 1–21 (MLEAAGAVLLGSAALLMVGRL), 35–55 (ILGLLVGILSLALAALTGSAI), and 56–76 (AGLVVGVITAAMMYLFSSRIV). A Zn(2+)-binding site is contributed by His-167. Residue Glu-168 is part of the active site. His-171 contributes to the Zn(2+) binding site. Transmembrane regions (helical) follow at residues 178–198 (LVMTVAAAVSTAIAYAFDPWL) and 209–229 (IAFLVLAGMLASLISTLLVAA). Residue Glu-235 coordinates Zn(2+).

This sequence belongs to the peptidase M48B family. Requires Zn(2+) as cofactor.

Its subcellular location is the cell membrane. The chain is Protease HtpX homolog from Methanopyrus kandleri (strain AV19 / DSM 6324 / JCM 9639 / NBRC 100938).